Consider the following 182-residue polypeptide: Glutamyl-tRNA(Gln) amidotransferase subunit F, mitochondrial (182 aa).

Belongs to the GatF family. In terms of assembly, subunit of the heterotrimeric GatFAB amidotransferase (AdT) complex, composed of A, B and F subunits.

It localises to the mitochondrion inner membrane. It carries out the reaction L-glutamyl-tRNA(Gln) + L-glutamine + ATP + H2O = L-glutaminyl-tRNA(Gln) + L-glutamate + ADP + phosphate + H(+). Allows the formation of correctly charged Gln-tRNA(Gln) through the transamidation of misacylated Glu-tRNA(Gln) in the mitochondria. The reaction takes place in the presence of glutamine and ATP through an activated gamma-phospho-Glu-tRNA(Gln). Required for proper protein synthesis within the mitochondrion. This is Glutamyl-tRNA(Gln) amidotransferase subunit F, mitochondrial from Candida tropicalis (strain ATCC MYA-3404 / T1) (Yeast).